The chain runs to 204 residues: LexA repressor (204 aa).

The H-T-H motif DNA-binding region spans 29-49; the sequence is VREICKGVGLSSTSSVHGHLS. Residues Ser126 and Lys163 each act as for autocatalytic cleavage activity in the active site.

The protein belongs to the peptidase S24 family. In terms of assembly, homodimer.

The enzyme catalyses Hydrolysis of Ala-|-Gly bond in repressor LexA.. Functionally, represses a number of genes involved in the response to DNA damage (SOS response), including recA and lexA. In the presence of single-stranded DNA, RecA interacts with LexA causing an autocatalytic cleavage which disrupts the DNA-binding part of LexA, leading to derepression of the SOS regulon and eventually DNA repair. The polypeptide is LexA repressor (Clostridium novyi (strain NT)).